A 97-amino-acid polypeptide reads, in one-letter code: NADH-quinone oxidoreductase subunit K (97 aa).

3 helical membrane passes run 1 to 21, 25 to 45, and 57 to 77; these read MSEY…GVLY, ILVM…LMVY, and VFVF…LAIL.

This sequence belongs to the complex I subunit 4L family. As to quaternary structure, NDH-1 is composed of 14 different subunits. Subunits NuoA, H, J, K, L, M, N constitute the membrane sector of the complex.

It localises to the cell inner membrane. It catalyses the reaction a quinone + NADH + 5 H(+)(in) = a quinol + NAD(+) + 4 H(+)(out). NDH-1 shuttles electrons from NADH, via FMN and iron-sulfur (Fe-S) centers, to quinones in the respiratory chain. The immediate electron acceptor for the enzyme in this species is believed to be a menaquinone. Couples the redox reaction to proton translocation (for every two electrons transferred, four hydrogen ions are translocated across the cytoplasmic membrane), and thus conserves the redox energy in a proton gradient. This is NADH-quinone oxidoreductase subunit K from Cytophaga hutchinsonii (strain ATCC 33406 / DSM 1761 / CIP 103989 / NBRC 15051 / NCIMB 9469 / D465).